The primary structure comprises 127 residues: Glycine cleavage system H protein (127 aa).

Positions 22–104 constitute a Lipoyl-binding domain; it reads KVRIGITHFA…YEKAWMIVVE (83 aa). An N6-lipoyllysine modification is found at K63.

Belongs to the GcvH family. In terms of assembly, the glycine cleavage system is composed of four proteins: P, T, L and H. (R)-lipoate is required as a cofactor.

The glycine cleavage system catalyzes the degradation of glycine. The H protein shuttles the methylamine group of glycine from the P protein to the T protein. Its function is as follows. Is also involved in protein lipoylation via its role as an octanoyl/lipoyl carrier protein intermediate. This chain is Glycine cleavage system H protein, found in Bacillus pumilus (strain SAFR-032).